Consider the following 141-residue polypeptide: U-scoloptoxin(17)-Er3a (141 aa).

Positions Met-1–Ala-21 are cleaved as a signal peptide.

This sequence belongs to the scoloptoxin-17 family. Post-translationally, contains 3 disulfide bonds. In terms of tissue distribution, expressed by the venom gland.

Its subcellular location is the secreted. This is U-scoloptoxin(17)-Er3a from Ethmostigmus rubripes (Giant centipede).